The following is a 66-amino-acid chain: Large ribosomal subunit protein bL35 (66 aa).

Positions Q25–R45 are disordered. Over residues G28 to A44 the composition is skewed to basic residues.

Belongs to the bacterial ribosomal protein bL35 family.

The protein is Large ribosomal subunit protein bL35 of Rhodospirillum centenum (strain ATCC 51521 / SW).